A 567-amino-acid chain; its full sequence is R-linalool synthase QH1, chloroplastic (567 aa).

Residues 1 to 24 (GNAYMRIYSTKTTRITANATVNAA) constitute a chloroplast transit peptide. The (2E)-geranyl diphosphate site is built by arginine 282, aspartate 319, aspartate 323, arginine 460, and aspartate 463. Aspartate 319 and aspartate 323 together coordinate Mg(2+). The DDXXD motif signature appears at 319-323 (DDVYD). Mg(2+)-binding residues include aspartate 463, threonine 467, and glutamate 471.

Belongs to the terpene synthase family. Tpsb subfamily. Mg(2+) is required as a cofactor. In terms of tissue distribution, highly expressed in leaves and lower levels in inflorescences. Not detected in stems, stem epidermis, stem stele or roots.

The protein localises to the plastid. The protein resides in the chloroplast. The catalysed reaction is (2E)-geranyl diphosphate + H2O = (R)-linalool + diphosphate. It functions in the pathway secondary metabolite biosynthesis; terpenoid biosynthesis. Functionally, monoterpene synthase that catalyzes the formation of (3R)-linalool from geranyl diphosphate, but not from isopentenyl diphosphate, dimethylallyl diphosphate, chrysanthemyl diphosphate, farnesyl diphosphate, (+)-copalyl diphosphate or geranylgeranyl diphosphate. This is R-linalool synthase QH1, chloroplastic (QH1) from Artemisia annua (Sweet wormwood).